An 802-amino-acid chain; its full sequence is Osmosensitive cation channel TMEM63C (802 aa).

The Extracellular segment spans residues 1–35 (MTASPESMGQKFRNMTANECFQSRSTVLQGQPFGG). The chain crosses the membrane as a helical span at residues 36-60 (IPTVLLLNIILWVCVVLVYSFLRKA). The Cytoplasmic segment spans residues 61-124 (AWDYGRLALL…RDRDLINKCG (64 aa)). Residues S75 and S78 each carry the phosphoserine modification. Residues 125–157 (EDARIYIMFQYHLIIFVLILCIPSLGIILPVNY) traverse the membrane as a helical segment. The Extracellular portion of the chain corresponds to 158-180 (IGSALDWSSHFGRTTIVNVSTES). The helical transmembrane segment at 181-205 (QFLWLHSIFAFMYFLTNFAFMGHHC) threads the bilayer. Over 206–401 (LGFVPKKNLH…IIWKHLSIRR (196 aa)) the chain is Cytoplasmic. The helical transmembrane segment at 402-431 (FSWWARFIAINTSLFFLFFFLTTPAIIINT) threads the bilayer. The Extracellular segment spans residues 432–446 (IDMYNVTRPIEKLQS). A helical membrane pass occupies residues 447 to 476 (PVVTQFFPSVLLWAFTVIMPLLVYFSAFLE). Topologically, residues 477-480 (AHWT) are cytoplasmic. The helical transmembrane segment at 481–517 (RSNQNLIIMYKCYIFLVFMVVILPSMGLTSLDVFLRW) threads the bilayer. The Extracellular segment spans residues 518–540 (LFDIYYLEHATIRFQCVFLPDNG). The helical transmembrane segment at 541–573 (AFFINYVITSALFGTGMELMRLGSLCTYCTRLF) threads the bilayer. Residues 574 to 593 (LSRSEPERVHIRKNLAMDFQ) are Cytoplasmic-facing. Residues 594 to 612 (FGREYAWMLNVFSVVMAYS) form a helical membrane-spanning segment. The Extracellular portion of the chain corresponds to 613–615 (ITC). The chain crosses the membrane as a helical span at residues 616 to 640 (PIIVPFGLLYLCMKHITDRYNMYYS). The Cytoplasmic portion of the chain corresponds to 641–647 (YAPTKLN). A helical membrane pass occupies residues 648 to 676 (AQIHMAAVYQAIFAPLLGLFWMLFFSILR). The Extracellular portion of the chain corresponds to 677–681 (VGSLH). Residues 682 to 702 (SITLFSLSSIIISVIIAFSGV) form a helical membrane-spanning segment. Over 703-802 (FLGKFRIAQQ…EGLELEGQSH (100 aa)) the chain is Cytoplasmic. The disordered stretch occupies residues 753–785 (TPASSPARHTYGTMNSQPEEGEEESGLRGFARE).

This sequence belongs to the CSC1 (TC 1.A.17) family. As to quaternary structure, monomer. Expressed in podocytes of kidney glomeruli.

The protein localises to the endoplasmic reticulum membrane. Its subcellular location is the cell membrane. It carries out the reaction Ca(2+)(in) = Ca(2+)(out). Acts as an osmosensitive cation channel preferentially activated upon hypotonic stress. In contrast to TMEM63B, does not show phospholipid scramblase activity. Enriched in mitochondria-ER contact sites where it may regulate the metabolite flux and organelles' morphologies in response to osmotic changes. In particular may regulate mitochondrial motility and function in motor neuron axons. Required for the functional integrity of the kidney glomerular filtration barrier. The polypeptide is Osmosensitive cation channel TMEM63C (Tmem63c) (Rattus norvegicus (Rat)).